Here is a 274-residue protein sequence, read N- to C-terminus: Hydroxyacylglutathione hydrolase, cytoplasmic isozyme (274 aa).

Zn(2+) contacts are provided by His-59, His-61, Asp-63, His-64, His-121, and Asp-144. Substrate is bound by residues Arg-153 and 188-190; that span reads HEY. A Zn(2+)-binding site is contributed by His-188. Residue Ser-257 is modified to Phosphoserine. Position 268-271 (268-271) interacts with substrate; the sequence is RAMK.

Belongs to the metallo-beta-lactamase superfamily. Glyoxalase II family. Requires Zn(2+) as cofactor.

Its subcellular location is the cytoplasm. It catalyses the reaction an S-(2-hydroxyacyl)glutathione + H2O = a 2-hydroxy carboxylate + glutathione + H(+). The enzyme catalyses (R)-S-lactoylglutathione + H2O = (R)-lactate + glutathione + H(+). Its pathway is secondary metabolite metabolism; methylglyoxal degradation; (R)-lactate from methylglyoxal: step 2/2. Inhibited by various thiol compounds such as glutathione and coenzyme A. Functionally, thiolesterase that catalyzes the hydrolysis of S-D-lactoylglutathione to form glutathione and D-lactic acid. Involved in the metabolism of methylglyoxal, a toxic compound for yeast proliferation, by converting methylglyoxal to lactate via S-D-lactoylglutathione by sequential enzyme reactions catalyzed by glyoxalase I and glyoxalase II. The chain is Hydroxyacylglutathione hydrolase, cytoplasmic isozyme from Saccharomyces cerevisiae (strain ATCC 204508 / S288c) (Baker's yeast).